Reading from the N-terminus, the 240-residue chain is MGLELYLDLLSQPCRAIYIFAKKNRIPFELRTVDLRKGQHLSDAFAQVNPLQKVPILKDGDFILTESVAILLYLARKYKVPDHWYPQDLQACARVDEYLAWQHTALRRNCLRALWHKVMLPVFLGEPVSPEMLATTLAELDMALQVLEGKFLQDKAFLTGSHISLADLVAITELMHPVGAGCQVFKGRPKLAAWRQRVEAAVGEVLFQEAHEVILKAKDSQPADPTLKQKMLPKVLAMIQ.

In terms of domain architecture, GST N-terminal spans 2–82 (GLELYLDLLS…YLARKYKVPD (81 aa)). Glutathione is bound by residues H40, 53 to 54 (KV), and 66 to 67 (ES). The 139-residue stretch at 88 to 226 (DLQACARVDE…AKDSQPADPT (139 aa)) folds into the GST C-terminal domain.

This sequence belongs to the GST superfamily. Theta family. In terms of assembly, homodimer.

The protein localises to the cytoplasm. It catalyses the reaction RX + glutathione = an S-substituted glutathione + a halide anion + H(+). Conjugation of reduced glutathione to a wide number of exogenous and endogenous hydrophobic electrophiles. Also binds steroids, bilirubin, carcinogens and numerous organic anions. Has dichloromethane dehalogenase activity. The polypeptide is Glutathione S-transferase theta-1 (GSTT1) (Bos taurus (Bovine)).